The chain runs to 663 residues: DNA topoisomerase 4 subunit B (663 aa).

ATP-binding positions include Tyr-7, Asn-47, Asp-74, 114 to 120, and Lys-341; that span reads GLHGVGA. The tract at residues 386–416 is disordered; the sequence is REAARKAREDARSGKKNKRKDTLLSGKLTPA. A compositionally biased stretch (basic and acidic residues) spans 387 to 398; it reads EAARKAREDARS. Positions 424 to 538 constitute a Toprim domain; it reads NELYLVEGDS…ADRVFIALPP (115 aa). Residues Glu-430, Asp-503, and Asp-505 each coordinate Mg(2+).

It belongs to the type II topoisomerase family. ParE type 2 subfamily. In terms of assembly, heterotetramer composed of ParC and ParE. Mg(2+) is required as a cofactor. The cofactor is Mn(2+). Requires Ca(2+) as cofactor.

The catalysed reaction is ATP-dependent breakage, passage and rejoining of double-stranded DNA.. Its function is as follows. Topoisomerase IV is essential for chromosome segregation. It relaxes supercoiled DNA. Performs the decatenation events required during the replication of a circular DNA molecule. This is DNA topoisomerase 4 subunit B from Staphylococcus aureus (strain MSSA476).